The primary structure comprises 393 residues: Riboflavin biosynthesis protein RibBA (393 aa).

Residues 1 to 200 are DHBP synthase; sequence MEFDEIKDAL…IESLVNYQKD (200 aa). D-ribulose 5-phosphate is bound by residues 27–28, D32, 139–143, and E163; these read RE and RTGHT. E28 serves as a coordination point for Mg(2+). A Mg(2+)-binding site is contributed by H142. The segment at 201 to 393 is GTP cyclohydrolase II; it reads KDTSVELKAK…TKKIKMGHLI (193 aa). 249 to 253 lines the GTP pocket; it reads RIHSA. C254, C265, and C267 together coordinate Zn(2+). GTP-binding positions include Q270, 291 to 293, and T313; that span reads EGR. D325 (proton acceptor; for GTP cyclohydrolase activity) is an active-site residue. The Nucleophile; for GTP cyclohydrolase activity role is filled by R327. Positions 348 and 353 each coordinate GTP.

This sequence in the N-terminal section; belongs to the DHBP synthase family. In the C-terminal section; belongs to the GTP cyclohydrolase II family. It depends on Mg(2+) as a cofactor. Requires Mn(2+) as cofactor. Zn(2+) serves as cofactor.

It catalyses the reaction D-ribulose 5-phosphate = (2S)-2-hydroxy-3-oxobutyl phosphate + formate + H(+). It carries out the reaction GTP + 4 H2O = 2,5-diamino-6-hydroxy-4-(5-phosphoribosylamino)-pyrimidine + formate + 2 phosphate + 3 H(+). It participates in cofactor biosynthesis; riboflavin biosynthesis; 2-hydroxy-3-oxobutyl phosphate from D-ribulose 5-phosphate: step 1/1. The protein operates within cofactor biosynthesis; riboflavin biosynthesis; 5-amino-6-(D-ribitylamino)uracil from GTP: step 1/4. Its function is as follows. Catalyzes the conversion of D-ribulose 5-phosphate to formate and 3,4-dihydroxy-2-butanone 4-phosphate. Catalyzes the conversion of GTP to 2,5-diamino-6-ribosylamino-4(3H)-pyrimidinone 5'-phosphate (DARP), formate and pyrophosphate. The protein is Riboflavin biosynthesis protein RibBA of Staphylococcus haemolyticus (strain JCSC1435).